The following is a 200-amino-acid chain: MESHNVSNSLNLDMEMDQEKAFDYSKRAQWLRAAVLGANDGLVSTASLMMGVGAVKQDVKVMILSGFAGLVAGACSMAIGEFVSVYSQYDIEVAQMKRENGGQVEKEKLPSPMQAAAASALAFSLGAIVPLMAAAFVKDYHVRIGAIVAAVTLALVMFGWLGAVLGKAPVFKSSARVLIGGWLAMAVTFGLTKLIGTHSL.

Residues 1 to 34 lie on the Cytoplasmic side of the membrane; the sequence is MESHNVSNSLNLDMEMDQEKAFDYSKRAQWLRAA. The helical transmembrane segment at 35-55 threads the bilayer; the sequence is VLGANDGLVSTASLMMGVGAV. Over 56 to 62 the chain is Vacuolar; that stretch reads KQDVKVM. The helical transmembrane segment at 63–83 threads the bilayer; that stretch reads ILSGFAGLVAGACSMAIGEFV. At 84 to 116 the chain is on the cytoplasmic side; that stretch reads SVYSQYDIEVAQMKRENGGQVEKEKLPSPMQAA. Residues 117 to 137 form a helical membrane-spanning segment; it reads AASALAFSLGAIVPLMAAAFV. Topologically, residues 138–143 are vacuolar; it reads KDYHVR. A helical membrane pass occupies residues 144 to 164; sequence IGAIVAAVTLALVMFGWLGAV. The Cytoplasmic segment spans residues 165 to 176; sequence LGKAPVFKSSAR. A helical transmembrane segment spans residues 177–197; the sequence is VLIGGWLAMAVTFGLTKLIGT. The Vacuolar portion of the chain corresponds to 198 to 200; that stretch reads HSL.

The protein belongs to the CCC1 family. As to expression, expressed in the vascular bundles of the shoot and the stele of the root. Expressed in inflorescences and at lower levels in leaves.

It is found in the vacuole membrane. The catalysed reaction is Fe(2+)(in) = Fe(2+)(out). Vacuolar iron transporter involved in the transfer of iron ions from the cytosol to the vacuole for intracellular iron storage. Involved in regulation of cellular iron homeostasis. Vacuolar iron storage is required for seed embryo and seedling development. The sequence is that of Vacuolar iron transporter homolog 1 from Arabidopsis thaliana (Mouse-ear cress).